Here is a 117-residue protein sequence, read N- to C-terminus: Large ribosomal subunit protein bL20 (117 aa).

This sequence belongs to the bacterial ribosomal protein bL20 family.

Its function is as follows. Binds directly to 23S ribosomal RNA and is necessary for the in vitro assembly process of the 50S ribosomal subunit. It is not involved in the protein synthesizing functions of that subunit. This is Large ribosomal subunit protein bL20 (rplT) from Synechocystis sp. (strain ATCC 27184 / PCC 6803 / Kazusa).